Reading from the N-terminus, the 68-residue chain is Large ribosomal subunit protein uL29 (68 aa).

This sequence belongs to the universal ribosomal protein uL29 family.

In Acidiphilium cryptum (strain JF-5), this protein is Large ribosomal subunit protein uL29.